A 708-amino-acid chain; its full sequence is Elongation factor G (708 aa).

Residues 8-290 (KRYRNIGISA…AVIQYLPAPM (283 aa)) form the tr-type G domain. Residues 17-24 (AHIDAGKT), 88-92 (DTPGH), and 142-145 (NKMD) contribute to the GTP site.

Belongs to the TRAFAC class translation factor GTPase superfamily. Classic translation factor GTPase family. EF-G/EF-2 subfamily.

It is found in the cytoplasm. Catalyzes the GTP-dependent ribosomal translocation step during translation elongation. During this step, the ribosome changes from the pre-translocational (PRE) to the post-translocational (POST) state as the newly formed A-site-bound peptidyl-tRNA and P-site-bound deacylated tRNA move to the P and E sites, respectively. Catalyzes the coordinated movement of the two tRNA molecules, the mRNA and conformational changes in the ribosome. The chain is Elongation factor G from Psychrobacter arcticus (strain DSM 17307 / VKM B-2377 / 273-4).